We begin with the raw amino-acid sequence, 855 residues long: Leucine--tRNA ligase (855 aa).

Positions 45–55 match the 'HIGH' region motif; the sequence is PYPSGRLHMGH. Positions 619–623 match the 'KMSKS' region motif; the sequence is KMSKS. Residue lysine 622 participates in ATP binding.

Belongs to the class-I aminoacyl-tRNA synthetase family.

It localises to the cytoplasm. The enzyme catalyses tRNA(Leu) + L-leucine + ATP = L-leucyl-tRNA(Leu) + AMP + diphosphate. In Hyphomonas neptunium (strain ATCC 15444), this protein is Leucine--tRNA ligase.